We begin with the raw amino-acid sequence, 156 residues long: EPIDERMAL PATTERNING FACTOR-like protein 6 (156 aa).

The signal sequence occupies residues 1 to 47 (MGFERTSSSLSLLSSSLPSSLQPSENTRAKFSLFYLLLLFFVLCVIA). Disulfide bonds link C113–C147, C117–C123, and C120–C149.

Belongs to the plant cysteine rich small secretory peptide family. Epidermal patterning factor subfamily. As to quaternary structure, interacts with ERECTA. As to expression, expressed in the internal layers of the root, hypocotyl and stems, and in the midrib of developing rosette leaves. Detected in a ring of cells surrounding the vascular elements. Expressed in developing stems soon after bolting, in inflorescence stems, near the root apex and in the chalazal region of ovules. Not found in cotyledons or in stomatal precursors or stomata.

Its subcellular location is the secreted. In terms of biological role, acts primarily as positive regulator of inflorescence growth. Endodermal expression is sufficient for proper inflorescence architecture. Redundantly involved with EPFL4 in procambial development regulation. Also acts as tissue-specific regulator of epidermal pattern. Controls stomatal patterning by repressing stomatal production. TMM (AC Q9SSD1) functions to dampen or block CHAL signaling. Not processed by SDD1 (AC O64495). Acts as growth-regulatory ligand for ERECTA family receptors. The protein is EPIDERMAL PATTERNING FACTOR-like protein 6 of Arabidopsis thaliana (Mouse-ear cress).